Consider the following 359-residue polypeptide: Probably inactive receptor-like protein kinase At5g41680 (359 aa).

The region spanning 59–357 is the Protein kinase domain; that stretch reads AASAEILGKG…KLIQDIPTNF (299 aa). ATP-binding positions include 65–73 and Lys-87; that span reads LGKGAHVTT.

It belongs to the protein kinase superfamily. Ser/Thr protein kinase family.

The sequence is that of Probably inactive receptor-like protein kinase At5g41680 from Arabidopsis thaliana (Mouse-ear cress).